Reading from the N-terminus, the 249-residue chain is Type III pantothenate kinase (249 aa).

8-15 (DAGNSRLK) is a binding site for ATP. Substrate contacts are provided by residues Y95 and 102-105 (GVDR). Catalysis depends on D104, which acts as the Proton acceptor. Residue D125 participates in K(+) binding. T128 serves as a coordination point for ATP. T179 is a binding site for substrate.

The protein belongs to the type III pantothenate kinase family. As to quaternary structure, homodimer. It depends on NH4(+) as a cofactor. K(+) serves as cofactor.

It is found in the cytoplasm. The enzyme catalyses (R)-pantothenate + ATP = (R)-4'-phosphopantothenate + ADP + H(+). The protein operates within cofactor biosynthesis; coenzyme A biosynthesis; CoA from (R)-pantothenate: step 1/5. Its function is as follows. Catalyzes the phosphorylation of pantothenate (Pan), the first step in CoA biosynthesis. The polypeptide is Type III pantothenate kinase (Alkalilimnicola ehrlichii (strain ATCC BAA-1101 / DSM 17681 / MLHE-1)).